A 355-amino-acid polypeptide reads, in one-letter code: Methyltransferase FUS9 (355 aa).

S-adenosyl-L-homocysteine-binding residues include Tyr-18, Asn-63, Asp-86, Ser-123, and Phe-124. Phe-231 is a Mg(2+) binding site.

This sequence belongs to the methyltransferase superfamily. Type-7 methyltransferase family. The cofactor is Mg(2+).

The protein operates within mycotoxin biosynthesis. Methyltransferase; part of the gene cluster that mediates the biosynthesis of the mycotoxin fusarin C. Within the cluster, FUS1, FUS2, FUS8 and FUS9 are sufficient for fusarin production. The roles of the other FUS members are yet undetermined. The fusarin C synthetase FUS1 is responsible for the condensation of one acetyl-coenzyme A (CoA) unit with six malonyl-CoA units and the amide linkage of the arising heptaketide and homoserine, subsequently releasing the first intermediate, prefusarin, as an alcohol with an open ring structure. The cytochrome P450 monooxygenase FUS8 participates in multiple oxidation processes at carbon C-20 and is able to use the FUS1 product as substrate, resulting in formation of 20-hydroxy-prefusarin. This reaction seems to be essential before the 2-pyrrolidone ring closure can be catalyzed by FUS2, generating 20-hydroxy-fusarin. FUS8 is able to further oxidizes carbon C-20 after ring closure, resulting in the formation of carboxy-fusarin C. As the last step, FUS9 methylates the hydroxyl group at C-21 to generate fusarin C. Fusarin C can then rearrange to epi-fusarin C, the (z)-isomers, and fusarin A and fusarin D. This Gibberella fujikuroi (strain CBS 195.34 / IMI 58289 / NRRL A-6831) (Bakanae and foot rot disease fungus) protein is Methyltransferase FUS9.